We begin with the raw amino-acid sequence, 408 residues long: Arginine biosynthesis bifunctional protein ArgJ (408 aa).

The substrate site is built by Thr156, Lys182, Thr193, Glu279, Asn403, and Ser408. Thr193 acts as the Nucleophile in catalysis.

The protein belongs to the ArgJ family. Heterotetramer of two alpha and two beta chains.

Its subcellular location is the cytoplasm. It carries out the reaction N(2)-acetyl-L-ornithine + L-glutamate = N-acetyl-L-glutamate + L-ornithine. The enzyme catalyses L-glutamate + acetyl-CoA = N-acetyl-L-glutamate + CoA + H(+). It participates in amino-acid biosynthesis; L-arginine biosynthesis; L-ornithine and N-acetyl-L-glutamate from L-glutamate and N(2)-acetyl-L-ornithine (cyclic): step 1/1. The protein operates within amino-acid biosynthesis; L-arginine biosynthesis; N(2)-acetyl-L-ornithine from L-glutamate: step 1/4. Its function is as follows. Catalyzes two activities which are involved in the cyclic version of arginine biosynthesis: the synthesis of N-acetylglutamate from glutamate and acetyl-CoA as the acetyl donor, and of ornithine by transacetylation between N(2)-acetylornithine and glutamate. This is Arginine biosynthesis bifunctional protein ArgJ from Dechloromonas aromatica (strain RCB).